A 344-amino-acid polypeptide reads, in one-letter code: RNA-binding protein squid (344 aa).

The tract at residues 1–55 is disordered; that stretch reads MAENKQVDTEINGEDFTKDVTADGPGSENGDAGAAGSTNGSSDNQSAASGQRDDD. Over residues 36–49 the composition is skewed to polar residues; that stretch reads GSTNGSSDNQSAAS. 2 consecutive RRM domains span residues 56–138 and 136–213; these read RKLF…HGKI and GKIF…RATP. Residue Ser-148 is modified to Phosphoserine. Disordered stretches follow at residues 214–238 and 301–344; these read KPEN…RGGY and GGGG…HQPY. An M9-like motif region spans residues 215-254; sequence PENQMMGGMRGGPRGGMRGGRGGYGGRGGYNNQWDGQGSY. 2 stretches are compositionally biased toward gly residues: residues 222–238 and 301–337; these read GMRG…RGGY and GGGG…GGGR. The tract at residues 300–338 is M9 motif; the sequence is GGGGGGNMGGGRGGPRGGGGPKGGGGFNGGKQRGGGGRQ.

In terms of assembly, interacts with bru1/Bruno; the interaction is direct but weak, and may play a role in regulation of grk mRNA localization and translation. Interacts (probably via M9 and M9-like motifs) with Tnpo/Transportin; the interaction is direct and is involved in nuclear localization. Interacts with fs(1)K10 (via N-terminus); may be involved in localization of sqd in the oocyte during oogenesis. As to quaternary structure, interacts (via C-terminus) with Hrb27C; the interaction is RNA dependent. Does not interact with Tnpo/Transportin. Interacts with fs(1)K10 (via N-terminus); may be involved in localization of sqd in the oocyte during oogenesis. In terms of assembly, interacts (probably via M9-like motif) with Tnpo/Transportin; the interaction is direct and is involved in nuclear localization. Interacts with fs(1)K10 (via N-terminus); may be involved in localization of sqd in the oocyte during oogenesis.

Its subcellular location is the nucleus. The protein resides in the cytoplasm. In terms of biological role, component of ribonucleosomes. Could be needed to organize a concentration gradient of a dorsalizing morphogen (Dm) originating in the germinal vesicle. At least one of the isoforms is essential in somatic tissues. Interacts with grk mRNA (via 3' UTR) and involved in its localization to the dorsal anterior region of the oocyte during dorsal-ventral axis determination; may function as a ribonuclear protein complex together with otu and Hrb27C. Required for polytene chromosome dispersal in nurse cells during oogenesis; nuclear isoforms play a greater role in this than cytoplasmic isoforms. Functionally, required nonredundantly with isoform A/sqdA for dorsoventral pattern determination during oogenesis. May be important in somatic tissues. Required nonredundantly with isoform B/SqdS for dorsoventral pattern determination during oogenesis. Its function is as follows. May lack a role in dorsoventral pattern determination during oogenesis. May be important in somatic tissues. The chain is RNA-binding protein squid from Drosophila melanogaster (Fruit fly).